We begin with the raw amino-acid sequence, 304 residues long: Glycine--tRNA ligase alpha subunit (304 aa).

This sequence belongs to the class-II aminoacyl-tRNA synthetase family. Tetramer of two alpha and two beta subunits.

Its subcellular location is the cytoplasm. The catalysed reaction is tRNA(Gly) + glycine + ATP = glycyl-tRNA(Gly) + AMP + diphosphate. This chain is Glycine--tRNA ligase alpha subunit, found in Streptococcus agalactiae serotype III (strain NEM316).